We begin with the raw amino-acid sequence, 605 residues long: Heparan-sulfate 6-O-sulfotransferase 2 (605 aa).

The Cytoplasmic segment spans residues 1–4 (MALP). The tract at residues 1 to 66 (MALPACAVRE…GVSHGFHTRP (66 aa)) is disordered. Residues 5–27 (ACAVREFEPPRQPERGAPVRTTC) form a helical; Signal-anchor for type II membrane protein membrane-spanning segment. Positions 9–18 (REFEPPRQPE) are enriched in basic and acidic residues. Residues 28-605 (PRRHSRVEAE…DYIGSVEKWR (578 aa)) are Lumenal-facing. N209 is a glycosylation site (N-linked (GlcNAc...) asparagine). 233–241 (HIQKTGGTT) is a 3'-phosphoadenylyl sulfate binding site. Substrate is bound by residues 263–264 (KK), R280, W285, and H290. The Proton acceptor role is filled by H290. 3'-phosphoadenylyl sulfate-binding residues include R325 and S333. Substrate contacts are provided by H337 and W344. N404 is a glycosylation site (N-linked (GlcNAc...) asparagine). Residue 457-459 (TQY) participates in 3'-phosphoadenylyl sulfate binding. A glycan (N-linked (GlcNAc...) asparagine) is linked at N460. 463 to 464 (RA) is a binding site for 3'-phosphoadenylyl sulfate. The segment at 530–605 (FQSQGQGQSQ…DYIGSVEKWR (76 aa)) is disordered. Low complexity predominate over residues 531-571 (QSQGQGQSQNPNQNQSQNPNPNANQNLTQNLMQNLTQSLSQ). 5 N-linked (GlcNAc...) asparagine glycosylation sites follow: N544, N556, N564, N589, and N592. The segment covering 579 to 597 (KQNSGKEQNDNTSNGTNDY) has biased composition (polar residues).

The protein belongs to the sulfotransferase 6 family.

The protein localises to the membrane. The enzyme catalyses alpha-D-glucosaminyl-[heparan sulfate](n) + 3'-phosphoadenylyl sulfate = 6-sulfo-alpha-D-glucosaminyl-[heparan sulfate](n) + adenosine 3',5'-bisphosphate + H(+). Functionally, 6-O-sulfation enzyme which catalyzes the transfer of sulfate from 3'-phosphoadenosine 5'-phosphosulfate (PAPS) to position 6 of the N-sulfoglucosamine residue (GlcNS) of heparan sulfate. The protein is Heparan-sulfate 6-O-sulfotransferase 2 of Homo sapiens (Human).